The sequence spans 90 residues: MTRTVMCRKYQEELPGLERPPYPGAKGQDIFEHISQKAWADWQKHQTMLINEKRLNMMNAEDRKFLQAEMDKFFAGEEYAQAEGYVPPAE.

The protein belongs to the Fe(2+)-trafficking protein family.

Could be a mediator in iron transactions between iron acquisition and iron-requiring processes, such as synthesis and/or repair of Fe-S clusters in biosynthetic enzymes. In Pseudomonas putida (strain ATCC 700007 / DSM 6899 / JCM 31910 / BCRC 17059 / LMG 24140 / F1), this protein is Probable Fe(2+)-trafficking protein.